A 142-amino-acid chain; its full sequence is Small heat shock protein IbpB (142 aa).

The sHSP domain maps to 26–137 (SGESQSFPPY…APQRIAINER (112 aa)).

This sequence belongs to the small heat shock protein (HSP20) family. As to quaternary structure, homodimer. Forms homomultimers of about 100-150 subunits at optimal growth temperatures. Conformation changes to oligomers at high temperatures or high ionic concentrations. The decrease in size of the multimers is accompanied by an increase in chaperone activity.

Its subcellular location is the cytoplasm. Its function is as follows. Associates with aggregated proteins, together with IbpA, to stabilize and protect them from irreversible denaturation and extensive proteolysis during heat shock and oxidative stress. Aggregated proteins bound to the IbpAB complex are more efficiently refolded and reactivated by the ATP-dependent chaperone systems ClpB and DnaK/DnaJ/GrpE. Its activity is ATP-independent. The chain is Small heat shock protein IbpB from Salmonella newport (strain SL254).